Consider the following 308-residue polypeptide: N-acetylneuraminate lyase (308 aa).

T50 and T51 together coordinate aceneuramate. The active-site Proton donor is Y142. The active-site Schiff-base intermediate with substrate is the K172. Aceneuramate-binding residues include S174, G198, D200, E201, and S217.

The protein belongs to the DapA family. NanA subfamily. As to quaternary structure, homotetramer.

The protein resides in the cytoplasm. It carries out the reaction aceneuramate = aldehydo-N-acetyl-D-mannosamine + pyruvate. It functions in the pathway amino-sugar metabolism; N-acetylneuraminate degradation. Its function is as follows. Catalyzes the cleavage of N-acetylneuraminic acid (sialic acid) to form pyruvate and N-acetylmannosamine via a Schiff base intermediate. It prevents sialic acids from being recycled and returning to the cell surface. Involved in the N-glycolylneuraminic acid (Neu5Gc) degradation pathway. This is N-acetylneuraminate lyase from Gallus gallus (Chicken).